Here is a 580-residue protein sequence, read N- to C-terminus: Phosphatase and actin regulator 1 (580 aa).

A phosphoserine mark is found at S67 and S78. Position 104 is a phosphothreonine (T104). The Nuclear localization signal signature appears at 108–129 (RRRSKFANLGRIFKPWKWRKKK). One copy of the RPEL 1 repeat lies at 138–163 (AALERKISMRQSREELIKRGVLKEIY). Disordered regions lie at residues 330–350 (SEQR…SSDG) and 374–408 (DNKE…DDAS). Residues 337 to 348 (STSYHSSGLHSS) are compositionally biased toward low complexity. Residues 374-383 (DNKENVPHEP) are compositionally biased toward basic and acidic residues. Residues 395–407 (EEEEEEEDEDDDA) are compositionally biased toward acidic residues. 3 RPEL repeats span residues 422–447 (DSLA…PRQT), 460–485 (TKLT…KPRN), and 498–523 (RRLT…IRFS). The disordered stretch occupies residues 463–494 (TRRLSQRPTAEELEQRNILKPRNEQEEQEEKR). S467 carries the phosphoserine modification. The segment covering 471–494 (TAEELEQRNILKPRNEQEEQEEKR) has biased composition (basic and acidic residues). S505 bears the Phosphoserine mark.

Belongs to the phosphatase and actin regulator family. In terms of assembly, interacts (via RPEL repeats) with ACTA1 and PPP1CA; ACTA1 and PPP1CA compete for the same binding site.

The protein localises to the cytoplasm. Its subcellular location is the synapse. It is found in the nucleus. Functionally, binds actin monomers (G actin) and plays a role in multiple processes including the regulation of actin cytoskeleton dynamics, actin stress fibers formation, cell motility and survival, formation of tubules by endothelial cells, and regulation of PPP1CA activity. Involved in the regulation of cortical neuron migration and dendrite arborization. The sequence is that of Phosphatase and actin regulator 1 (Phactr1) from Mus musculus (Mouse).